The chain runs to 263 residues: Small ribosomal subunit protein eS4 (263 aa).

Positions 42–104 (LPLIVFLRNR…TGEHFRLVYD (63 aa)) constitute an S4 RNA-binding domain.

It belongs to the eukaryotic ribosomal protein eS4 family.

This Gorilla gorilla gorilla (Western lowland gorilla) protein is Small ribosomal subunit protein eS4 (RPS4Y1).